A 221-amino-acid chain; its full sequence is Small ribosomal subunit protein uS2 (221 aa).

This sequence belongs to the universal ribosomal protein uS2 family.

The polypeptide is Small ribosomal subunit protein uS2 (Methanococcus maripaludis (strain C6 / ATCC BAA-1332)).